A 225-amino-acid polypeptide reads, in one-letter code: Membrane protein (225 aa).

The Virion surface portion of the chain corresponds to 1–20 (MSNETNCTLDFEQSVELFKE). A helical transmembrane segment spans residues 21 to 41 (YNLFITAFLLFLTIILQYGYA). The Intravirion portion of the chain corresponds to 42-51 (TRSKFIYILK). Residues 52-72 (MIVLWCFWPLNIAVGVISCIY) form a helical membrane-spanning segment. Residues 73–77 (PPNTG) lie on the Virion surface side of the membrane. The chain crosses the membrane as a helical span at residues 78–98 (GLVAAIILTVFACLSFVGYWI). The Intravirion portion of the chain corresponds to 99–225 (QSIRLFKRCR…VATGGSSLYT (127 aa)).

This sequence belongs to the gammacoronaviruses M protein family. Homomultimer. Interacts with envelope E protein in the budding compartment of the host cell, which is located between endoplasmic reticulum and the Golgi complex. Forms a complex with HE and S proteins. Interacts with nucleocapsid N protein. This interaction probably participates in RNA packaging into the virus.

It is found in the virion membrane. The protein resides in the host Golgi apparatus membrane. Its function is as follows. Component of the viral envelope that plays a central role in virus morphogenesis and assembly via its interactions with other viral proteins. The polypeptide is Membrane protein (Gallus gallus (Chicken)).